A 297-amino-acid chain; its full sequence is Formamidopyrimidine-DNA glycosylase (297 aa).

The active-site Schiff-base intermediate with DNA is the Pro-2. Glu-3 acts as the Proton donor in catalysis. The Proton donor; for beta-elimination activity role is filled by Lys-58. His-106, Arg-133, and Arg-178 together coordinate DNA. An FPG-type zinc finger spans residues 263-297; it reads FVYDRAGEPCRICGTPIRQILQGQRSTFYCPHCQH. Arg-287 (proton donor; for delta-elimination activity) is an active-site residue.

This sequence belongs to the FPG family. As to quaternary structure, monomer. It depends on Zn(2+) as a cofactor.

The enzyme catalyses Hydrolysis of DNA containing ring-opened 7-methylguanine residues, releasing 2,6-diamino-4-hydroxy-5-(N-methyl)formamidopyrimidine.. The catalysed reaction is 2'-deoxyribonucleotide-(2'-deoxyribose 5'-phosphate)-2'-deoxyribonucleotide-DNA = a 3'-end 2'-deoxyribonucleotide-(2,3-dehydro-2,3-deoxyribose 5'-phosphate)-DNA + a 5'-end 5'-phospho-2'-deoxyribonucleoside-DNA + H(+). Involved in base excision repair of DNA damaged by oxidation or by mutagenic agents. Acts as a DNA glycosylase that recognizes and removes damaged bases. Has a preference for oxidized purines, such as 7,8-dihydro-8-oxoguanine (8-oxoG). Has AP (apurinic/apyrimidinic) lyase activity and introduces nicks in the DNA strand. Cleaves the DNA backbone by beta-delta elimination to generate a single-strand break at the site of the removed base with both 3'- and 5'-phosphates. This is Formamidopyrimidine-DNA glycosylase from Cupriavidus metallidurans (strain ATCC 43123 / DSM 2839 / NBRC 102507 / CH34) (Ralstonia metallidurans).